A 389-amino-acid polypeptide reads, in one-letter code: Ribonucleoside-diphosphate reductase subunit M2 (389 aa).

Ser-20 is modified (phosphoserine). Position 33 is a phosphothreonine (Thr-33). The short motif at 49-51 (RRI) is the Cy element. The Fe cation site is built by Asp-138, Glu-169, and His-172. The active site involves Tyr-176. Fe cation contacts are provided by Glu-232, Glu-266, and His-269.

It belongs to the ribonucleoside diphosphate reductase small chain family. In terms of assembly, heterodimer of a large and a small subunit. Interacts (via Cy motif and when phosphorylated at Thr-33) with CCNF; the interaction occurs exclusively in G2 and early M. Requires Fe cation as cofactor. In terms of processing, phosphorylation on Ser-20 relieves the inhibitory effect on Wnt signaling. Phosphorylated on Thr-33 by CDK1 and CDK2; predominantly in G2 and M phase. Post-translationally, ubiquitinated by the SCF(CCNF) E3 ubiquitin-protein ligase complex; leading to its degradation by the proteasome.

It is found in the cytoplasm. The protein resides in the nucleus. The catalysed reaction is a 2'-deoxyribonucleoside 5'-diphosphate + [thioredoxin]-disulfide + H2O = a ribonucleoside 5'-diphosphate + [thioredoxin]-dithiol. Functionally, provides the precursors necessary for DNA synthesis. Catalyzes the biosynthesis of deoxyribonucleotides from the corresponding ribonucleotides. Inhibits Wnt signaling. This Homo sapiens (Human) protein is Ribonucleoside-diphosphate reductase subunit M2 (RRM2).